Reading from the N-terminus, the 518-residue chain is GMP synthase [glutamine-hydrolyzing] (518 aa).

The Glutamine amidotransferase type-1 domain maps to 11-203 (SILVLDFGSQ…AFDVCQAEAN (193 aa)). Cys88 serves as the catalytic Nucleophile. Active-site residues include His177 and Glu179. Positions 204-393 (WSMDDFIDMQ…LGMPSDLVWR (190 aa)) constitute a GMPS ATP-PPase domain. 231-237 (SGGVDSS) contacts ATP.

As to quaternary structure, homodimer.

It carries out the reaction XMP + L-glutamine + ATP + H2O = GMP + L-glutamate + AMP + diphosphate + 2 H(+). It participates in purine metabolism; GMP biosynthesis; GMP from XMP (L-Gln route): step 1/1. Its function is as follows. Catalyzes the synthesis of GMP from XMP. This is GMP synthase [glutamine-hydrolyzing] from Lactiplantibacillus plantarum (strain ATCC BAA-793 / NCIMB 8826 / WCFS1) (Lactobacillus plantarum).